The sequence spans 244 residues: 5'-deoxynucleotidase (244 aa).

The enzyme catalyses a 2'-deoxyribonucleoside 5'-phosphate + H2O = a 2'-deoxyribonucleoside + phosphate. Following host DNA degradation, is responsible for the degradation of 5'-dNMP's to deoxynucleosides that can be further excreted. Active on deoxynucleoside 5'-monophosphates but not active as a phosphatase on ribonucleotides, deoxynucleoside 5'-triphosphates, deoxynucleoside 3'-monophosphates, or deoxyoligonucleotides. The protein is 5'-deoxynucleotidase (dmp) of Escherichia coli (Enterobacteria phage T5).